The primary structure comprises 200 residues: Elongation factor Ts (200 aa).

The tract at residues 82–85 (TDFV) is involved in Mg(2+) ion dislocation from EF-Tu.

It belongs to the EF-Ts family.

The protein localises to the cytoplasm. Associates with the EF-Tu.GDP complex and induces the exchange of GDP to GTP. It remains bound to the aminoacyl-tRNA.EF-Tu.GTP complex up to the GTP hydrolysis stage on the ribosome. This is Elongation factor Ts from Solidesulfovibrio magneticus (strain ATCC 700980 / DSM 13731 / RS-1) (Desulfovibrio magneticus).